The sequence spans 398 residues: Cysteine desulfurase 2 (398 aa).

Residues 71–72, Asn-150, Gln-178, and 198–200 contribute to the pyridoxal 5'-phosphate site; these read GT and SGH. N6-(pyridoxal phosphate)lysine is present on Lys-201. Residue Thr-236 participates in pyridoxal 5'-phosphate binding. Cys-323 acts as the Cysteine persulfide intermediate in catalysis. Cys-323 is a [2Fe-2S] cluster binding site.

Belongs to the class-V pyridoxal-phosphate-dependent aminotransferase family. NifS/IscS subfamily. In terms of assembly, homodimer. The cofactor is pyridoxal 5'-phosphate.

The catalysed reaction is (sulfur carrier)-H + L-cysteine = (sulfur carrier)-SH + L-alanine. Functionally, catalyzes the removal of elemental sulfur atoms from cysteine to produce alanine. Seems to participate in the biosynthesis of the nitrogenase metalloclusters by providing the inorganic sulfur required for the Fe-S core formation. This chain is Cysteine desulfurase 2, found in Trichormus variabilis (strain ATCC 29413 / PCC 7937) (Anabaena variabilis).